The sequence spans 85 residues: Small ribosomal subunit protein bS18 (85 aa).

Belongs to the bacterial ribosomal protein bS18 family. Part of the 30S ribosomal subunit. Forms a tight heterodimer with protein bS6.

Binds as a heterodimer with protein bS6 to the central domain of the 16S rRNA, where it helps stabilize the platform of the 30S subunit. The sequence is that of Small ribosomal subunit protein bS18 from Helicobacter acinonychis (strain Sheeba).